The chain runs to 157 residues: S-ribosylhomocysteine lyase (157 aa).

Histidine 54, histidine 58, and cysteine 126 together coordinate Fe cation.

This sequence belongs to the LuxS family. As to quaternary structure, homodimer. It depends on Fe cation as a cofactor.

It carries out the reaction S-(5-deoxy-D-ribos-5-yl)-L-homocysteine = (S)-4,5-dihydroxypentane-2,3-dione + L-homocysteine. Involved in the synthesis of autoinducer 2 (AI-2) which is secreted by bacteria and is used to communicate both the cell density and the metabolic potential of the environment. The regulation of gene expression in response to changes in cell density is called quorum sensing. Catalyzes the transformation of S-ribosylhomocysteine (RHC) to homocysteine (HC) and 4,5-dihydroxy-2,3-pentadione (DPD). This Bacillus velezensis (strain DSM 23117 / BGSC 10A6 / LMG 26770 / FZB42) (Bacillus amyloliquefaciens subsp. plantarum) protein is S-ribosylhomocysteine lyase.